A 257-amino-acid polypeptide reads, in one-letter code: Acetylglutamate kinase (257 aa).

Substrate contacts are provided by residues 41 to 42 (GG), R63, and N158.

It belongs to the acetylglutamate kinase family. ArgB subfamily.

The protein resides in the cytoplasm. It carries out the reaction N-acetyl-L-glutamate + ATP = N-acetyl-L-glutamyl 5-phosphate + ADP. Its pathway is amino-acid biosynthesis; L-arginine biosynthesis; N(2)-acetyl-L-ornithine from L-glutamate: step 2/4. In terms of biological role, catalyzes the ATP-dependent phosphorylation of N-acetyl-L-glutamate. The polypeptide is Acetylglutamate kinase (Phocaeicola vulgatus (strain ATCC 8482 / DSM 1447 / JCM 5826 / CCUG 4940 / NBRC 14291 / NCTC 11154) (Bacteroides vulgatus)).